The sequence spans 654 residues: DNA-directed RNA polymerase III subunit RPC3 (654 aa).

A Phosphothreonine modification is found at Thr-27. Disordered regions lie at residues 381–401 and 422–448; these read LSRKPSDNKKRSGSNAAASLP and KSLQESGDTQEEDEEEEDLDADTEDPH. Phosphoserine occurs at positions 392 and 394. The segment covering 429–444 has biased composition (acidic residues); sequence DTQEEDEEEEDLDADT. The tract at residues 581 to 602 is leucine-zipper; that stretch reads LEWNMANLLFKKEKLKQENSTL.

The protein belongs to the eukaryotic RPC3/POLR3C RNA polymerase subunit family. Component of the RNA polymerase III (Pol III) complex consisting of 17 subunits.

The protein localises to the cytoplasm. It is found in the nucleus. DNA-dependent RNA polymerase catalyzes the transcription of DNA into RNA using the four ribonucleoside triphosphates as substrates. Specific core component of RNA polymerase III which synthesizes small RNAs, such as 5S rRNA and tRNAs. The sequence is that of DNA-directed RNA polymerase III subunit RPC3 (RPC82) from Saccharomyces cerevisiae (strain ATCC 204508 / S288c) (Baker's yeast).